Consider the following 417-residue polypeptide: Lactose permease (417 aa).

An N-formylmethionine; partial modification is found at Met1. Over 1–7 the chain is Cytoplasmic; it reads MYYLKNT. A helical membrane pass occupies residues 8–34; it reads NFWMFGLFFFFYFFIMGAYFPFFPIWL. The Periplasmic portion of the chain corresponds to 35-41; the sequence is HDINHIS. The helical transmembrane segment at 42–70 threads the bilayer; sequence KSDTGIIFAAISLFSLLFQPLFGLLSDKL. Topologically, residues 71-74 are cytoplasmic; the sequence is GLRK. Residues 75–100 form a helical membrane-spanning segment; sequence YLLWIITGMLVMFAPFFIFIFGPLLQ. Over 101–104 the chain is Periplasmic; it reads YNIL. A helical membrane pass occupies residues 105–129; it reads VGSIVGGIYLGFCFNAGAPAVEAFI. Topologically, residues 130–140 are cytoplasmic; that stretch reads EKVSRRSNFEF. Residues 141–163 traverse the membrane as a helical segment; the sequence is GRARMFGCVGWALCASIVGIMFT. At 164 to 166 the chain is on the periplasmic side; that stretch reads INN. The helical transmembrane segment at 167-186 threads the bilayer; that stretch reads QFVFWLGSGCALILAVLLFF. Topologically, residues 187 to 220 are cytoplasmic; that stretch reads AKTDAPSSATVANAVGANHSAFSLKLALELFRQP. Residues 221–249 form a helical membrane-spanning segment; that stretch reads KLWFLSLYVIGVSCTYDVFDQQFANFFTS. Topologically, residues 250-253 are periplasmic; the sequence is FFAT. Residues 254–278 traverse the membrane as a helical segment; it reads GEQGTRVFGYVTTMGELLNASIMFF. The Cytoplasmic portion of the chain corresponds to 279-288; sequence APLIINRIGG. The chain crosses the membrane as a helical span at residues 289-308; that stretch reads KNALLLAGTIMSVRIIGSSF. Residues 309–311 lie on the Periplasmic side of the membrane; the sequence is ATS. The chain crosses the membrane as a helical span at residues 312-334; the sequence is ALEVVILKTLHMFEVPFLLVGCF. At 335–346 the chain is on the cytoplasmic side; sequence KYITSQFEVRFS. Residues 347–374 form a helical membrane-spanning segment; sequence ATIYLVCFCFFKQLAMIFMSVLAGNMYE. Residues 375–377 are Periplasmic-facing; the sequence is SIG. A helical membrane pass occupies residues 378–398; sequence FQGAYLVLGLVALGFTLISVF. At 399–417 the chain is on the cytoplasmic side; sequence TLSGPGPLSLLRRQVNEVA.

As to quaternary structure, monomer.

Its subcellular location is the cell inner membrane. It catalyses the reaction lactose(in) + H(+)(in) = lactose(out) + H(+)(out). The enzyme catalyses melibiose(in) + H(+)(in) = melibiose(out) + H(+)(out). Its activity is regulated as follows. Inhibited by the proton ionophore carbonyl cyanide m-chlorophenylhydrazone (CCCP). Functionally, responsible for transport of beta-galactosides into the cell, with the concomitant import of a proton (symport system). Can transport lactose, melibiose, the synthetic disaccharide lactulose or the analog methyl-1-thio-beta,D-galactopyranoside (TMG), but not sucrose or fructose. The substrate specificity is directed toward the galactopyranosyl moiety of the substrate. This Escherichia coli (strain K12) protein is Lactose permease.